Reading from the N-terminus, the 273-residue chain is NAD-dependent protein deacylase (273 aa).

In terms of domain architecture, Deacetylase sirtuin-type spans 1–269 (MNLDNAIHEA…PRIVEQVKKI (269 aa)). NAD(+) is bound by residues 25-44 (GAGV…GGVW) and 107-110 (QNID). The Proton acceptor role is filled by His-125. Zn(2+) contacts are provided by Cys-133, Cys-136, Cys-173, and Cys-176. NAD(+) is bound by residues 211–213 (GTS), 237–239 (NPN), and Thr-255.

It belongs to the sirtuin family. Class III subfamily. Requires Zn(2+) as cofactor.

It localises to the cytoplasm. It catalyses the reaction N(6)-acetyl-L-lysyl-[protein] + NAD(+) + H2O = 2''-O-acetyl-ADP-D-ribose + nicotinamide + L-lysyl-[protein]. Its function is as follows. NAD-dependent protein deacetylase which modulates the activities of several proteins which are inactive in their acetylated form. In Desulfosudis oleivorans (strain DSM 6200 / JCM 39069 / Hxd3) (Desulfococcus oleovorans), this protein is NAD-dependent protein deacylase (cobB).